The sequence spans 559 residues: Branched-chain-amino-acid aminotransferase-like protein 2 (559 aa).

The protein belongs to the class-IV pyridoxal-phosphate-dependent aminotransferase family.

The polypeptide is Branched-chain-amino-acid aminotransferase-like protein 2 (Arabidopsis thaliana (Mouse-ear cress)).